Reading from the N-terminus, the 246-residue chain is Ubiquinone/menaquinone biosynthesis C-methyltransferase UbiE (246 aa).

S-adenosyl-L-methionine is bound by residues Thr75, Asp95, and 119–120 (DA).

It belongs to the class I-like SAM-binding methyltransferase superfamily. MenG/UbiE family.

It catalyses the reaction a 2-demethylmenaquinol + S-adenosyl-L-methionine = a menaquinol + S-adenosyl-L-homocysteine + H(+). The catalysed reaction is a 2-methoxy-6-(all-trans-polyprenyl)benzene-1,4-diol + S-adenosyl-L-methionine = a 5-methoxy-2-methyl-3-(all-trans-polyprenyl)benzene-1,4-diol + S-adenosyl-L-homocysteine + H(+). It functions in the pathway quinol/quinone metabolism; menaquinone biosynthesis; menaquinol from 1,4-dihydroxy-2-naphthoate: step 2/2. The protein operates within cofactor biosynthesis; ubiquinone biosynthesis. Methyltransferase required for the conversion of demethylmenaquinol (DMKH2) to menaquinol (MKH2) and the conversion of 2-polyprenyl-6-methoxy-1,4-benzoquinol (DDMQH2) to 2-polyprenyl-3-methyl-6-methoxy-1,4-benzoquinol (DMQH2). This chain is Ubiquinone/menaquinone biosynthesis C-methyltransferase UbiE, found in Desulfotalea psychrophila (strain LSv54 / DSM 12343).